The sequence spans 329 residues: Malate dehydrogenase (329 aa).

13–19 (GAAGNIS) contacts NAD(+). The substrate site is built by Arg94 and Arg100. NAD(+)-binding positions include Asn107, Gln114, and 131–133 (VGN). Residues Asn133 and Arg164 each coordinate substrate. Residue His189 is the Proton acceptor of the active site.

It belongs to the LDH/MDH superfamily. MDH type 2 family.

It carries out the reaction (S)-malate + NAD(+) = oxaloacetate + NADH + H(+). In terms of biological role, catalyzes the reversible oxidation of malate to oxaloacetate. The protein is Malate dehydrogenase of Psychrobacter arcticus (strain DSM 17307 / VKM B-2377 / 273-4).